Reading from the N-terminus, the 78-residue chain is Acyl carrier protein (78 aa).

Residues 4 to 78 form the Carrier domain; that stretch reads AEIRDKVYDI…QQAIDYIVKK (75 aa). Position 39 is an O-(pantetheine 4'-phosphoryl)serine (S39).

It belongs to the acyl carrier protein (ACP) family. Post-translationally, 4'-phosphopantetheine is transferred from CoA to a specific serine of apo-ACP by AcpS. This modification is essential for activity because fatty acids are bound in thioester linkage to the sulfhydryl of the prosthetic group.

The protein localises to the cytoplasm. It functions in the pathway lipid metabolism; fatty acid biosynthesis. Its function is as follows. Carrier of the growing fatty acid chain in fatty acid biosynthesis. In Chlorobium luteolum (strain DSM 273 / BCRC 81028 / 2530) (Pelodictyon luteolum), this protein is Acyl carrier protein.